The chain runs to 358 residues: Trace amine-associated receptor 7d (358 aa).

The Extracellular portion of the chain corresponds to 1 to 47; it reads MATGDDSFPWDQDSILSRDLFSATSTELCYENLNRSCVRSPYSPGPR. An N-linked (GlcNAc...) asparagine glycan is attached at Asn34. 2 cysteine pairs are disulfide-bonded: Cys37–Cys201 and Cys120–Cys205. Residues 48-68 form a helical membrane-spanning segment; that stretch reads LILYAVFGFGAVLAVCGNLLV. At 69 to 83 the chain is on the cytoplasmic side; sequence MTSILHFRQLHSPAN. Residues 84 to 104 form a helical membrane-spanning segment; the sequence is FLVASLACADFLVGVMVMPFS. Topologically, residues 105 to 121 are extracellular; it reads MVRSVEGCWYFGESYCK. The chain crosses the membrane as a helical span at residues 122-143; it reads FHSCFEGSFCYSSLFHLCFISV. Topologically, residues 144–166 are cytoplasmic; the sequence is DRYIAVSDPLTYPTRFTASVSGK. A helical transmembrane segment spans residues 167-187; the sequence is CITFSWLLSIIYSFSLLYTGA. The Extracellular portion of the chain corresponds to 188-212; it reads NDAGLEDLVSALTCVGGCQIAVNQT. N-linked (GlcNAc...) asparagine glycosylation is present at Asn210. Residues 213-233 traverse the membrane as a helical segment; it reads WVFINFLLFLIPTLVMITVYS. Topologically, residues 234–274 are cytoplasmic; it reads KIFLIAKQQAQNIEKMSKQTARASESYKDRVTKRERKAAKT. The chain crosses the membrane as a helical span at residues 275 to 295; it reads LGIAVAAFLLSWLPYFIDSII. Residues 296–309 are Extracellular-facing; sequence DAFLGFITPTYVYE. The helical transmembrane segment at 310-333 threads the bilayer; it reads ILVWIVYYNSAMNPLIYAFFYSWF. The Cytoplasmic portion of the chain corresponds to 334–358; sequence RKAIKLIVSGKILRENSSTTNLFPE.

Belongs to the G-protein coupled receptor 1 family. In terms of tissue distribution, specifically expressed in neurons of the olfactory epithelium.

Its subcellular location is the cell membrane. In terms of biological role, olfactory receptor specific for trace amines, such as beta-phenylethylamine (beta-PEA). Trace amine compounds are enriched in animal body fluids and act on trace amine-associated receptors (TAARs) to elicit both intraspecific and interspecific innate behaviors. Ligand-binding causes a conformation change that triggers signaling via G(s)-class of G alpha proteins (GNAL or GNAS). The polypeptide is Trace amine-associated receptor 7d (Mus musculus (Mouse)).